We begin with the raw amino-acid sequence, 211 residues long: Thiamine-phosphate synthase (211 aa).

4-amino-2-methyl-5-(diphosphooxymethyl)pyrimidine contacts are provided by residues 37-41 and N69; that span reads QLRIK. Positions 70 and 89 each coordinate Mg(2+). S108 contributes to the 4-amino-2-methyl-5-(diphosphooxymethyl)pyrimidine binding site. 134 to 136 is a binding site for 2-[(2R,5Z)-2-carboxy-4-methylthiazol-5(2H)-ylidene]ethyl phosphate; it reads TQT. K137 serves as a coordination point for 4-amino-2-methyl-5-(diphosphooxymethyl)pyrimidine. Residues G166 and 186–187 each bind 2-[(2R,5Z)-2-carboxy-4-methylthiazol-5(2H)-ylidene]ethyl phosphate; that span reads VS.

This sequence belongs to the thiamine-phosphate synthase family. Requires Mg(2+) as cofactor.

It catalyses the reaction 2-[(2R,5Z)-2-carboxy-4-methylthiazol-5(2H)-ylidene]ethyl phosphate + 4-amino-2-methyl-5-(diphosphooxymethyl)pyrimidine + 2 H(+) = thiamine phosphate + CO2 + diphosphate. The catalysed reaction is 2-(2-carboxy-4-methylthiazol-5-yl)ethyl phosphate + 4-amino-2-methyl-5-(diphosphooxymethyl)pyrimidine + 2 H(+) = thiamine phosphate + CO2 + diphosphate. The enzyme catalyses 4-methyl-5-(2-phosphooxyethyl)-thiazole + 4-amino-2-methyl-5-(diphosphooxymethyl)pyrimidine + H(+) = thiamine phosphate + diphosphate. It functions in the pathway cofactor biosynthesis; thiamine diphosphate biosynthesis; thiamine phosphate from 4-amino-2-methyl-5-diphosphomethylpyrimidine and 4-methyl-5-(2-phosphoethyl)-thiazole: step 1/1. Functionally, condenses 4-methyl-5-(beta-hydroxyethyl)thiazole monophosphate (THZ-P) and 2-methyl-4-amino-5-hydroxymethyl pyrimidine pyrophosphate (HMP-PP) to form thiamine monophosphate (TMP). The chain is Thiamine-phosphate synthase from Salmonella paratyphi B (strain ATCC BAA-1250 / SPB7).